Reading from the N-terminus, the 303-residue chain is Uracil phosphoribosyltransferase (303 aa).

The tract at residues 1–86 (MHIIMKTILA…RYVSSTPTDS (86 aa)) is unknown. Residues 87–303 (LSSKPLAAVY…DRLCGTSNPS (217 aa)) are UPRTase. 5-phospho-alpha-D-ribose 1-diphosphate-binding positions include arginine 170, arginine 195, and 222–230 (DPMLATGGS). Residues isoleucine 285 and 290–292 (GDA) each bind uracil. Position 291 (aspartate 291) interacts with 5-phospho-alpha-D-ribose 1-diphosphate.

It belongs to the UPRTase family. Mg(2+) is required as a cofactor.

It carries out the reaction UMP + diphosphate = 5-phospho-alpha-D-ribose 1-diphosphate + uracil. It participates in pyrimidine metabolism; UMP biosynthesis via salvage pathway; UMP from uracil: step 1/1. Its activity is regulated as follows. Allosterically activated by GTP. Catalyzes the conversion of uracil and 5-phospho-alpha-D-ribose 1-diphosphate (PRPP) to UMP and diphosphate. In Chlamydia muridarum (strain MoPn / Nigg), this protein is Uracil phosphoribosyltransferase (upp).